We begin with the raw amino-acid sequence, 146 residues long: Kappa-casein (146 aa).

Residues Thr107 and Thr112 are each glycosylated (O-linked (GalNAc...) threonine). Position 125 is a phosphoserine; alternate (Ser125). A glycan (O-linked (GalNAc...) serine; alternate) is linked at Ser125. An O-linked (GalNAc...) threonine glycan is attached at Thr142. Ser143 carries the phosphoserine modification.

This sequence belongs to the kappa-casein family. In terms of tissue distribution, mammary gland specific. Secreted in milk.

The protein resides in the secreted. Its function is as follows. Kappa-casein stabilizes micelle formation, preventing casein precipitation in milk. This Tapirus indicus (Asiatic tapir) protein is Kappa-casein (CSN3).